We begin with the raw amino-acid sequence, 223 residues long: Protein-L-isoaspartate O-methyltransferase (223 aa).

Ser-70 is an active-site residue.

Belongs to the methyltransferase superfamily. L-isoaspartyl/D-aspartyl protein methyltransferase family.

The protein resides in the cytoplasm. The enzyme catalyses [protein]-L-isoaspartate + S-adenosyl-L-methionine = [protein]-L-isoaspartate alpha-methyl ester + S-adenosyl-L-homocysteine. Catalyzes the methyl esterification of L-isoaspartyl residues in peptides and proteins that result from spontaneous decomposition of normal L-aspartyl and L-asparaginyl residues. It plays a role in the repair and/or degradation of damaged proteins. The polypeptide is Protein-L-isoaspartate O-methyltransferase (Methylobacillus flagellatus (strain ATCC 51484 / DSM 6875 / VKM B-1610 / KT)).